Here is a 218-residue protein sequence, read N- to C-terminus: ATP phosphoribosyltransferase (218 aa).

It belongs to the ATP phosphoribosyltransferase family. Short subfamily. In terms of assembly, heteromultimer composed of HisG and HisZ subunits.

It localises to the cytoplasm. It carries out the reaction 1-(5-phospho-beta-D-ribosyl)-ATP + diphosphate = 5-phospho-alpha-D-ribose 1-diphosphate + ATP. Its pathway is amino-acid biosynthesis; L-histidine biosynthesis; L-histidine from 5-phospho-alpha-D-ribose 1-diphosphate: step 1/9. In terms of biological role, catalyzes the condensation of ATP and 5-phosphoribose 1-diphosphate to form N'-(5'-phosphoribosyl)-ATP (PR-ATP). Has a crucial role in the pathway because the rate of histidine biosynthesis seems to be controlled primarily by regulation of HisG enzymatic activity. In Trichormus variabilis (strain ATCC 29413 / PCC 7937) (Anabaena variabilis), this protein is ATP phosphoribosyltransferase.